The primary structure comprises 317 residues: Protein phosphatase 1 regulatory subunit 3C-B (317 aa).

Residues 150–258 (RNRLKKNLVC…NNDGKNYKLV (109 aa)) form the CBM21 domain.

Interacts with PPP1CC catalytic subunit of PP1 and associates with glycogen. Forms complexes with glycogen phosphorylase, glycogen synthase and phosphorylase kinase which is necessary for its regulation of PP1 activity.

In terms of biological role, acts as a glycogen-targeting subunit for PP1 and regulates its activity. Activates glycogen synthase, reduces glycogen phosphorylase activity and limits glycogen breakdown. The polypeptide is Protein phosphatase 1 regulatory subunit 3C-B (ppp1r3cb) (Danio rerio (Zebrafish)).